Here is a 164-residue protein sequence, read N- to C-terminus: uncharacterized protein (164 aa).

The segment at 46 to 142 is disordered; it reads GRSPEQKEHV…APDNSIYDTL (97 aa).

This is an uncharacterized protein from Caenorhabditis elegans.